A 284-amino-acid polypeptide reads, in one-letter code: 4-diphosphocytidyl-2-C-methyl-D-erythritol kinase (284 aa).

Lysine 14 is a catalytic residue. An ATP-binding site is contributed by 98-108 (PMGGGLGGGSS). Aspartate 140 is a catalytic residue.

It belongs to the GHMP kinase family. IspE subfamily.

The catalysed reaction is 4-CDP-2-C-methyl-D-erythritol + ATP = 4-CDP-2-C-methyl-D-erythritol 2-phosphate + ADP + H(+). It functions in the pathway isoprenoid biosynthesis; isopentenyl diphosphate biosynthesis via DXP pathway; isopentenyl diphosphate from 1-deoxy-D-xylulose 5-phosphate: step 3/6. Functionally, catalyzes the phosphorylation of the position 2 hydroxy group of 4-diphosphocytidyl-2C-methyl-D-erythritol. This is 4-diphosphocytidyl-2-C-methyl-D-erythritol kinase from Shewanella baltica (strain OS223).